We begin with the raw amino-acid sequence, 369 residues long: Queuine tRNA-ribosyltransferase (369 aa).

Asp-89 functions as the Proton acceptor in the catalytic mechanism. Substrate contacts are provided by residues 89-93 (DSGGF), Asp-142, Gln-184, and Gly-211. The tract at residues 242–248 (GGGSPEL) is RNA binding. The active-site Nucleophile is Asp-261. Residues 266–270 (TRIAR) form an RNA binding; important for wobble base 34 recognition region. Zn(2+) is bound by residues Cys-299, Cys-301, Cys-304, and His-330.

This sequence belongs to the queuine tRNA-ribosyltransferase family. Homodimer. Within each dimer, one monomer is responsible for RNA recognition and catalysis, while the other monomer binds to the replacement base PreQ1. Zn(2+) is required as a cofactor.

The catalysed reaction is 7-aminomethyl-7-carbaguanine + guanosine(34) in tRNA = 7-aminomethyl-7-carbaguanosine(34) in tRNA + guanine. The protein operates within tRNA modification; tRNA-queuosine biosynthesis. Catalyzes the base-exchange of a guanine (G) residue with the queuine precursor 7-aminomethyl-7-deazaguanine (PreQ1) at position 34 (anticodon wobble position) in tRNAs with GU(N) anticodons (tRNA-Asp, -Asn, -His and -Tyr). Catalysis occurs through a double-displacement mechanism. The nucleophile active site attacks the C1' of nucleotide 34 to detach the guanine base from the RNA, forming a covalent enzyme-RNA intermediate. The proton acceptor active site deprotonates the incoming PreQ1, allowing a nucleophilic attack on the C1' of the ribose to form the product. After dissociation, two additional enzymatic reactions on the tRNA convert PreQ1 to queuine (Q), resulting in the hypermodified nucleoside queuosine (7-(((4,5-cis-dihydroxy-2-cyclopenten-1-yl)amino)methyl)-7-deazaguanosine). This is Queuine tRNA-ribosyltransferase from Thermotoga neapolitana (strain ATCC 49049 / DSM 4359 / NBRC 107923 / NS-E).